Here is a 204-residue protein sequence, read N- to C-terminus: Holliday junction branch migration complex subunit RuvA (204 aa).

The domain I stretch occupies residues 1–64; the sequence is MIGRLRGILL…EDAQLLYGFN (64 aa). The tract at residues 65 to 143 is domain II; sequence TVKERALFRE…GWSAGDLFTP (79 aa). The tract at residues 144–155 is flexible linker; sequence FTDAAPVDSGST. The tract at residues 156–204 is domain III; sequence SSNSAEEEAVSALLALGYKPVQASKVVSQIAKPDMTSEQLIREALKSMV.

The protein belongs to the RuvA family. Homotetramer. Forms an RuvA(8)-RuvB(12)-Holliday junction (HJ) complex. HJ DNA is sandwiched between 2 RuvA tetramers; dsDNA enters through RuvA and exits via RuvB. An RuvB hexamer assembles on each DNA strand where it exits the tetramer. Each RuvB hexamer is contacted by two RuvA subunits (via domain III) on 2 adjacent RuvB subunits; this complex drives branch migration. In the full resolvosome a probable DNA-RuvA(4)-RuvB(12)-RuvC(2) complex forms which resolves the HJ.

The protein resides in the cytoplasm. Its function is as follows. The RuvA-RuvB-RuvC complex processes Holliday junction (HJ) DNA during genetic recombination and DNA repair, while the RuvA-RuvB complex plays an important role in the rescue of blocked DNA replication forks via replication fork reversal (RFR). RuvA specifically binds to HJ cruciform DNA, conferring on it an open structure. The RuvB hexamer acts as an ATP-dependent pump, pulling dsDNA into and through the RuvAB complex. HJ branch migration allows RuvC to scan DNA until it finds its consensus sequence, where it cleaves and resolves the cruciform DNA. This chain is Holliday junction branch migration complex subunit RuvA, found in Vibrio vulnificus (strain CMCP6).